A 363-amino-acid polypeptide reads, in one-letter code: 3-dehydroquinate synthase (363 aa).

NAD(+) contacts are provided by residues 75-80 (DAEEGK), 109-113 (GAVTD), 133-134 (TS), lysine 146, lysine 155, and 173-176 (TLQT). The Zn(2+) site is built by glutamate 188, histidine 251, and histidine 267.

Belongs to the sugar phosphate cyclases superfamily. Dehydroquinate synthase family. The cofactor is Co(2+). Zn(2+) serves as cofactor. NAD(+) is required as a cofactor.

It is found in the cytoplasm. It carries out the reaction 7-phospho-2-dehydro-3-deoxy-D-arabino-heptonate = 3-dehydroquinate + phosphate. It functions in the pathway metabolic intermediate biosynthesis; chorismate biosynthesis; chorismate from D-erythrose 4-phosphate and phosphoenolpyruvate: step 2/7. Functionally, catalyzes the conversion of 3-deoxy-D-arabino-heptulosonate 7-phosphate (DAHP) to dehydroquinate (DHQ). The polypeptide is 3-dehydroquinate synthase (Paenarthrobacter aurescens (strain TC1)).